A 176-amino-acid chain; its full sequence is Large ribosomal subunit protein eL20 (176 aa).

Residue K11 forms a Glycyl lysine isopeptide (Lys-Gly) (interchain with G-Cter in SUMO2) linkage. Y63 is modified (phosphotyrosine). Position 71 is a phosphoserine (S71). An N6-succinyllysine modification is found at K76. S123 bears the Phosphoserine mark. Residues K128 and K170 each participate in a glycyl lysine isopeptide (Lys-Gly) (interchain with G-Cter in SUMO2) cross-link.

The protein belongs to the eukaryotic ribosomal protein eL20 family. Component of the large ribosomal subunit. Binds IPO9 with high affinity.

The protein resides in the cytoplasm. In terms of biological role, component of the large ribosomal subunit. The ribosome is a large ribonucleoprotein complex responsible for the synthesis of proteins in the cell. This chain is Large ribosomal subunit protein eL20 (RPL18A), found in Bos taurus (Bovine).